The following is a 388-amino-acid chain: Phosphoglycerate kinase (388 aa).

Residues 21 to 23, arginine 36, 59 to 62, arginine 114, and arginine 147 contribute to the substrate site; these read DLN and HLGR. ATP-binding positions include lysine 198, glutamate 315, and 341-344; that span reads GGDT.

This sequence belongs to the phosphoglycerate kinase family. As to quaternary structure, monomer.

It is found in the cytoplasm. The catalysed reaction is (2R)-3-phosphoglycerate + ATP = (2R)-3-phospho-glyceroyl phosphate + ADP. Its pathway is carbohydrate degradation; glycolysis; pyruvate from D-glyceraldehyde 3-phosphate: step 2/5. The chain is Phosphoglycerate kinase from Hahella chejuensis (strain KCTC 2396).